Consider the following 295-residue polypeptide: Nucleotide-binding protein RBAM_031990 (295 aa).

16–23 provides a ligand contact to ATP; that stretch reads GMSGAGKT. 67 to 70 contributes to the GTP binding site; that stretch reads DLRG.

It belongs to the RapZ-like family.

Its function is as follows. Displays ATPase and GTPase activities. The protein is Nucleotide-binding protein RBAM_031990 of Bacillus velezensis (strain DSM 23117 / BGSC 10A6 / LMG 26770 / FZB42) (Bacillus amyloliquefaciens subsp. plantarum).